The primary structure comprises 420 residues: Glycerol-3-phosphate dehydrogenase [NAD(+)] 2, chloroplastic (420 aa).

Residues 1-45 (MAASVQPACLDLHFSGKHPPLLKHNAIIVRCVSSPNVIPEADSIS) constitute a chloroplast transit peptide. NAD(+)-binding positions include 94-99 (GGGSFG), Phe171, Lys194, and Ala228. Lys194 provides a ligand contact to substrate. Lys279 functions as the Proton acceptor in the catalytic mechanism. NAD(+) contacts are provided by Arg343 and Glu369. 343–344 (RN) contributes to the substrate binding site.

Belongs to the NAD-dependent glycerol-3-phosphate dehydrogenase family.

It localises to the plastid. Its subcellular location is the chloroplast. The enzyme catalyses sn-glycerol 3-phosphate + NAD(+) = dihydroxyacetone phosphate + NADH + H(+). It functions in the pathway membrane lipid metabolism; glycerophospholipid metabolism. Functionally, required to supply glycerol-3-phosphate in the chloroplast for the synthesis of glycerolipids. Required for activation of systemic acquired resistance (SAR). Provision of glycerol-3-phosphate may be involved in generating lipid signals necessary for mediating defense responses and SAR. The protein is Glycerol-3-phosphate dehydrogenase [NAD(+)] 2, chloroplastic (GLY1) of Arabidopsis thaliana (Mouse-ear cress).